A 245-amino-acid polypeptide reads, in one-letter code: tRNA1(Val) (adenine(37)-N6)-methyltransferase (245 aa).

The protein belongs to the methyltransferase superfamily. tRNA (adenine-N(6)-)-methyltransferase family.

The protein localises to the cytoplasm. It carries out the reaction adenosine(37) in tRNA1(Val) + S-adenosyl-L-methionine = N(6)-methyladenosine(37) in tRNA1(Val) + S-adenosyl-L-homocysteine + H(+). Its function is as follows. Specifically methylates the adenine in position 37 of tRNA(1)(Val) (anticodon cmo5UAC). The sequence is that of tRNA1(Val) (adenine(37)-N6)-methyltransferase from Shigella boydii serotype 18 (strain CDC 3083-94 / BS512).